Reading from the N-terminus, the 446-residue chain is MGSIEIPNCSGSLVYKTISDFIEFPNHEQKLWWHSTAPMFAEMLRVAGYDLHSQYKILGIFLNHVIPFLGVYPTRINNRWLSILTRYGTPFELSLNCSQSLVRYTYEPINSATGTPKDPFNTHSIWDALDRLMPLQKGIDLEFFKHLKQDLTVDDQDSAYLLENNLVGGQIRTQNKLALDLKGGNFVLKTYIYPALKSLATGKSIKTLVFDSVYRLCRQNPSLEAPLRALEEYVDSKGPNSTASPRLLSCDLIDPSKSRVKIYILELNVTLEAMEDLWTMGGRLNDASTLAGLEMLRELWGLIKLPSGMRDYPEPFLQLGTIPDEQLPLMANYTLHHNQAMPEPQVYFTTFGLNDGRVADGLVTFFERRGWSHMAQTYKDSLRAYYPHADQETLNYLHAYISFSYRKGTPYLSVYLQSFETGDWPISNFGIPVAKPLRSNISDPDR.

Residues 83–84 and Glu92 each bind L-tryptophan; that span reads IL. Substrate is bound by residues Arg103, Lys189, and Tyr191. Positions 193 and 246 each coordinate L-tryptophan. Residues Arg259, Lys261, Tyr263, Gln345, and Tyr347 each contribute to the substrate site.

The protein belongs to the tryptophan dimethylallyltransferase family. Homodimer.

The enzyme catalyses L-tryptophan + dimethylallyl diphosphate = 4-(3-methylbut-2-enyl)-L-tryptophan + diphosphate. The protein operates within alkaloid biosynthesis; ergot alkaloid biosynthesis. Its function is as follows. Tryptophan dimethylallyltransferase; part of the gene cluster that mediates the biosynthesis of fungal ergot alkaloid. DmaW catalyzes the first step of ergot alkaloid biosynthesis by condensing dimethylallyl diphosphate (DMAP) and tryptophan to form 4-dimethylallyl-L-tryptophan. The second step is catalyzed by the methyltransferase easF that methylates 4-dimethylallyl-L-tryptophan in the presence of S-adenosyl-L-methionine, resulting in the formation of 4-dimethylallyl-L-abrine. The catalase easC and the FAD-dependent oxidoreductase easE then transform 4-dimethylallyl-L-abrine to chanoclavine-I which is further oxidized by easD in the presence of NAD(+), resulting in the formation of chanoclavine-I aldehyde. Chanoclavine-I aldehyde is the precursor of ergoamides and ergopeptines in Clavicipitaceae, and clavine-type alcaloids such as fumiclavine in Trichocomaceae. However, the metabolites downstream of chanoclavine-I aldehyde in Arthrodermataceae have not been identified yet. The sequence is that of Tryptophan dimethylallyltransferase from Arthroderma otae (strain ATCC MYA-4605 / CBS 113480) (Microsporum canis).